A 335-amino-acid polypeptide reads, in one-letter code: Nucleoid-associated protein PP_0973 (335 aa).

It belongs to the YejK family.

It localises to the cytoplasm. The protein localises to the nucleoid. The sequence is that of Nucleoid-associated protein PP_0973 from Pseudomonas putida (strain ATCC 47054 / DSM 6125 / CFBP 8728 / NCIMB 11950 / KT2440).